The primary structure comprises 1029 residues: E3 ubiquitin-protein ligase UPL6 (1029 aa).

The disordered stretch occupies residues Met1–Thr20. Basic and acidic residues predominate over residues Ser8–Thr20. Residues Gln45–Cys74 enclose the IQ domain. The HECT domain maps to Ser688–Ser1029. Catalysis depends on Cys997, which acts as the Glycyl thioester intermediate.

This sequence belongs to the UPL family.

It carries out the reaction S-ubiquitinyl-[E2 ubiquitin-conjugating enzyme]-L-cysteine + [acceptor protein]-L-lysine = [E2 ubiquitin-conjugating enzyme]-L-cysteine + N(6)-ubiquitinyl-[acceptor protein]-L-lysine.. Its pathway is protein modification; protein ubiquitination. Probable E3 ubiquitin-protein ligase which mediates ubiquitination and subsequent proteasomal degradation of target proteins. The sequence is that of E3 ubiquitin-protein ligase UPL6 (UPL6) from Arabidopsis thaliana (Mouse-ear cress).